The sequence spans 176 residues: Glutamyl-tRNA(Gln) amidotransferase subunit F, mitochondrial (176 aa).

This sequence belongs to the GatF family. Subunit of the heterotrimeric GatFAB amidotransferase (AdT) complex, composed of A, B and F subunits.

The protein resides in the mitochondrion inner membrane. The enzyme catalyses L-glutamyl-tRNA(Gln) + L-glutamine + ATP + H2O = L-glutaminyl-tRNA(Gln) + L-glutamate + ADP + phosphate + H(+). Allows the formation of correctly charged Gln-tRNA(Gln) through the transamidation of misacylated Glu-tRNA(Gln) in the mitochondria. The reaction takes place in the presence of glutamine and ATP through an activated gamma-phospho-Glu-tRNA(Gln). Required for proper protein synthesis within the mitochondrion. The chain is Glutamyl-tRNA(Gln) amidotransferase subunit F, mitochondrial from Yarrowia lipolytica (strain CLIB 122 / E 150) (Yeast).